A 989-amino-acid chain; its full sequence is Cation-chloride cotransporter 1 (989 aa).

The span at 1–10 (MENGEIEGAA) shows a compositional bias: acidic residues. The interval 1-29 (MENGEIEGAADDGVPVPAPPNGRRYRPVG) is disordered. Topologically, residues 1–132 (MENGEIEGAA…GRPKETGPKF (132 aa)) are cytoplasmic. Residues 133 to 153 (GTMMGVFVPCLQNILGIIYYI) traverse the membrane as a helical segment. At 154 to 167 (RFTWIVGMAGVWQS) the chain is on the extracellular side. The chain crosses the membrane as a helical span at residues 168-188 (LVLVSFCGACTFLTGISLSAI). At 189–214 (ATNGAMKGGGPYYLIGRALGPEVGVS) the chain is on the cytoplasmic side. A helical membrane pass occupies residues 215–235 (IGLCFFLGNAVAGSMYVLGAV). Topologically, residues 236 to 280 (ETFLDAVPSAGFFKESVTVVNNTLVNGTATASTATISTPSLHDLQ) are extracellular. N256 and N261 each carry an N-linked (GlcNAc...) asparagine glycan. The helical transmembrane segment at 281-301 (VYGVIVTILLCFIVFGGVKII) threads the bilayer. Over 302–304 (NKV) the chain is Cytoplasmic. The helical transmembrane segment at 305-325 (APAFLIPVLFSLLCIYLGVFI) threads the bilayer. Residues 326 to 365 (APRHNAPKGITGLSITTFKDNWGSEYQRTNNAGVPDPNGS) are Extracellular-facing. N363 carries an N-linked (GlcNAc...) asparagine glycan. A helical membrane pass occupies residues 366 to 386 (IYWDFNALVGLFFPAVTGIMA). Over 387-405 (GSNRSASLKDTQRSIPIGT) the chain is Cytoplasmic. The chain crosses the membrane as a helical span at residues 406–426 (LSATLTTTAMYLFSVLLFGAL). At 427–441 (ATREELLTDRLLTAT) the chain is on the extracellular side. A helical membrane pass occupies residues 442 to 462 (VAWPAPAVIYIGIILSTLGAA). Over 463–498 (LQSLTGAPRLLAAIANDDILPVLNYFKVSEGAEPHS) the chain is Cytoplasmic. The chain crosses the membrane as a helical span at residues 499 to 519 (ATLFTAFICICCVVIGNLDLI). Over 520-522 (TPT) the chain is Extracellular. A helical transmembrane segment spans residues 523–543 (ITMFFLLCYAGVNLSCFLLDL). The Cytoplasmic portion of the chain corresponds to 544-551 (LDAPSWRP). A helical membrane pass occupies residues 552 to 572 (RWKFHHWSLSLVGALLCVVIM). Over 573 to 578 (FLISWS) the chain is Extracellular. Residues 579 to 599 (FTVVSLALASLIYYYVSLKGK) traverse the membrane as a helical segment. Residues 600 to 989 (AGDWGDGFKS…YRRDVVTFFT (390 aa)) lie on the Cytoplasmic side of the membrane.

Belongs to the SLC12A transporter family. Expressed in roots, stems and leaves with higher expression in root and leaf tips.

Its subcellular location is the membrane. Functionally, probable cation/chloride cotransporter that may mediate potassium-chloride cotransport. Involved in plant development and K(+) and Cl(-) homeostasis. May not be involved in sodium-chloride cotransport. The polypeptide is Cation-chloride cotransporter 1 (CCC1) (Oryza sativa subsp. japonica (Rice)).